Reading from the N-terminus, the 1173-residue chain is Pleckstrin homology domain-containing family A member 6 (1173 aa).

Residues 1-22 are compositionally biased toward polar residues; the sequence is MSNKTGGKRSATINSDIANHNM. The segment at 1 to 39 is disordered; that stretch reads MSNKTGGKRSATINSDIANHNMVSEVPPERPNIRATRTS. Residues 59 to 158 form the PH domain; sequence PVTKAGWLYK…WIQAMGEAAR (100 aa). The tract at residues 163–346 is disordered; sequence PAQKSVPQPV…PSRFYPMPRR (184 aa). The span at 201 to 233 shows a compositional bias: basic and acidic residues; the sequence is LEPEAKTRGEGDGRGCEKAERRPERPEVKKETL. Serine 247 and serine 251 each carry phosphoserine. 2 stretches are compositionally biased toward polar residues: residues 270–281 and 311–322; these read NGWQYSSPSRPG and RKSSMNQLQQWV. Phosphoserine is present on residues serine 314, serine 459, serine 461, and serine 472. A Phosphotyrosine modification is found at tyrosine 492. Serine 665 bears the Phosphoserine mark. 2 disordered regions span residues 737 to 872 and 888 to 984; these read RKNN…PRDI and ALNK…RPAY. Composition is skewed to low complexity over residues 761–782 and 789–799; these read SSNSPASPLSSASLTSPLSPFS and GSPTKPGSSEE. Pro residues predominate over residues 815 to 824; the sequence is ESPPTVPPLP. Serine 864 carries the post-translational modification Phosphoserine. Threonine 868 carries the phosphothreonine modification. Serine 901 carries the phosphoserine modification. Threonine 908 carries the post-translational modification Phosphothreonine. Over residues 915–926 the composition is skewed to polar residues; it reads RTTNGLTNGLSS. Serine 925 carries the post-translational modification Phosphoserine. Basic and acidic residues predominate over residues 940 to 952; it reads GKVKMSVEEQMDR. Residues 953 to 967 show a composition bias toward basic residues; the sequence is MRRHQSGSMKEKRRS. Phosphoserine occurs at positions 973, 979, and 992. The residue at position 1045 (threonine 1045) is a Phosphothreonine. Phosphoserine is present on serine 1065. 2 disordered regions span residues 1093–1114 and 1130–1173; these read PIGEGDSVDVPQDSESQLQEQE and RGRM…TMRV. Phosphothreonine is present on threonine 1140. Residues 1141-1155 are compositionally biased toward pro residues; sequence PSPPTSPASPTPPVN. At serine 1142 the chain carries Phosphoserine. Position 1145 is a phosphothreonine (threonine 1145). Residues serine 1146 and serine 1149 each carry the phosphoserine modification. Threonine 1151 is modified (phosphothreonine).

The polypeptide is Pleckstrin homology domain-containing family A member 6 (Plekha6) (Mus musculus (Mouse)).